Consider the following 213-residue polypeptide: Kynurenine formamidase (213 aa).

Trp18 is a binding site for substrate. Zn(2+) contacts are provided by His48, His52, and Asp54. Catalysis depends on His58, which acts as the Proton donor/acceptor. The Zn(2+) site is built by His160 and Glu172.

Belongs to the Cyclase 1 superfamily. KynB family. As to quaternary structure, homodimer. Zn(2+) is required as a cofactor.

It carries out the reaction N-formyl-L-kynurenine + H2O = L-kynurenine + formate + H(+). It participates in amino-acid degradation; L-tryptophan degradation via kynurenine pathway; L-kynurenine from L-tryptophan: step 2/2. Functionally, catalyzes the hydrolysis of N-formyl-L-kynurenine to L-kynurenine, the second step in the kynurenine pathway of tryptophan degradation. The chain is Kynurenine formamidase from Burkholderia pseudomallei (strain 1106a).